The primary structure comprises 79 residues: Transcriptional regulator SplA (79 aa).

Its function is as follows. Regulator of the spore photoproduct lyase operon (splAB). The chain is Transcriptional regulator SplA (splA) from Bacillus subtilis (strain 168).